We begin with the raw amino-acid sequence, 541 residues long: Protein wntless homolog (541 aa).

The Cytoplasmic segment spans residues 1 to 15 (MAGAIIENMSTKKLC). The chain crosses the membrane as a helical span at residues 16-36 (IVGGILLVFQIVAFLVGGLIA). Over 37–232 (PAPTTAVSYV…GIHQNGGFTK (196 aa)) the chain is Lumenal. The segment at 101–202 (MEMSPWFQFM…KYYLLNIRLP (102 aa)) is interaction with Wnt proteins. A helical membrane pass occupies residues 233 to 253 (VWFAMKTFLTPSIFIIMVWYW). Topologically, residues 254 to 268 (RRITMMSRPPVLLEK) are cytoplasmic. Residues 269–289 (VIFALGISMTFINIPVEWFSI) traverse the membrane as a helical segment. The Lumenal segment spans residues 290–303 (GFDWTWMLLFGDIR). A helical membrane pass occupies residues 304–324 (QGIFYAMLLSFWIIFCGEHMM). Over 325–331 (DQHERNH) the chain is Cytoplasmic. Residues 332-352 (IAGYWKQVGPIAVGSFCLFIF) traverse the membrane as a helical segment. At 353-380 (DMCERGVQLTNPFYSIWTTDVGTELAMA) the chain is on the lumenal side. Residues 381–401 (FIIVAGICLCLYFLFLCFMVF) form a helical membrane-spanning segment. Residues 402–431 (QVFRNISGKQSSLPAMSKVRRLHYEGLIFR) are Cytoplasmic-facing. Residues 432 to 452 (FKFLMLITLACAAMTVIFFIV) form a helical membrane-spanning segment. Over 453 to 471 (SQVTEGHWKWGGVTVQVSS) the chain is Lumenal. A helical transmembrane segment spans residues 472-492 (AFFTGIYGMWNLYVFALMFLY). The Cytoplasmic segment spans residues 493 to 541 (APSHKNYGEDQSNGDLGVHSGEELQLTTTITHVDGPTEIYKLTRKEAQE).

This sequence belongs to the wntless family. In terms of assembly, interacts with WNT3A. Interacts with WNT1, WNT3 and WNT5A. In terms of processing, N-glycosylated. In terms of tissue distribution, expressed in the brain, skeletal muscle, heart muscle, lung, gut, liver, and kidney (at protein level). In the brain, expressed in the cortex, striatum, ventral tegmentum, nucleus accumbens and to a lesser extent in the Purkinjie cells in the cerebellum. Expressed in eye iridocorneal angle.

The protein localises to the golgi apparatus membrane. It is found in the cytoplasmic vesicle membrane. Its subcellular location is the cell membrane. The protein resides in the endoplasmic reticulum membrane. It localises to the early endosome membrane. In terms of biological role, regulates Wnt proteins sorting and secretion in a feedback regulatory mechanism. This reciprocal interaction plays a key role in the regulation of expression, subcellular location, binding and organelle-specific association of Wnt proteins. Also plays an important role in establishment of the anterior-posterior body axis formation during development. The protein is Protein wntless homolog (Wls) of Rattus norvegicus (Rat).